We begin with the raw amino-acid sequence, 860 residues long: Elastin (860 aa).

An N-terminal signal peptide occupies residues 1–27 (MAGLTAVVPQPGVLLILLLNLLHPAQP). A 4-hydroxyproline mark is found at Pro35 and Pro72. Hydroxyproline is present on Pro84. Pro105 is modified (4-hydroxyproline). Residues Lys123 and Lys127 each carry the allysine modification. Pro217, Pro230, Pro233, and Pro253 each carry 4-hydroxyproline. Allysine occurs at positions 299, 318, and 321. Pro346 carries the post-translational modification 4-hydroxyproline. Allysine occurs at positions 368 and 371. At Pro383 the chain carries Hydroxyproline. 4-hydroxyproline is present on residues Pro399 and Pro405. Residues Pro410 and Pro415 each carry the hydroxyproline modification. An allysine mark is found at Lys431, Lys435, Lys438, Lys481, and Lys484. 4-hydroxyproline is present on residues Pro498 and Pro519. Allysine is present on residues Lys534, Lys595, Lys599, and Lys603. Pro617, Pro626, Pro644, Pro653, and Pro661 each carry 4-hydroxyproline. Allysine occurs at positions 668 and 671. Pro702 is subject to 4-hydroxyproline. Allysine occurs at positions 719, 723, 783, and 786. At Pro832 the chain carries 4-hydroxyproline. A disulfide bridge connects residues Cys850 and Cys855.

The protein belongs to the elastin family. In terms of assembly, the polymeric elastin chains are cross-linked together into an extensible 3D network. Forms a ternary complex with BGN and MFAP2. Interacts with MFAP2 via divalent cations (calcium &gt; magnesium &gt; manganese) in a dose-dependent and saturating manner. Interacts with FBLN5 and FBN1. Forms a ternary complex with FBN1 and FBLN2 or FBLN5. Interacts with MFAP4 in a Ca (2+)-dependent manner; this interaction promotes ELN self-assembly. Interacts with EFEMP2 with moderate affinity. In terms of processing, elastin is formed through the cross-linking of its soluble precursor tropoelastin. Cross-linking is initiated through the action of lysyl oxidase on exposed lysines to form allysine. Subsequent spontaneous condensation reactions with other allysine or unmodified lysine residues result in various bi-, tri-, and tetrafunctional cross-links. The most abundant cross-links in mature elastin fibers are lysinonorleucine, allysine aldol, desmosine, and isodesmosine. Hydroxylation on proline residues within the sequence motif, GXPG, is most likely to be 4-hydroxy as this fits the requirement for 4-hydroxylation in vertebrates.

It is found in the secreted. The protein localises to the extracellular space. Its subcellular location is the extracellular matrix. Its function is as follows. Major structural protein of tissues such as aorta and nuchal ligament, which must expand rapidly and recover completely. Molecular determinant of the late arterial morphogenesis, stabilizing arterial structure by regulating proliferation and organization of vascular smooth muscle. This chain is Elastin (Eln), found in Mus musculus (Mouse).